Here is a 305-residue protein sequence, read N- to C-terminus: Homoserine O-acetyltransferase (305 aa).

Catalysis depends on Cys142, which acts as the Acyl-thioester intermediate. Substrate is bound by residues Lys163 and Ser192. The active-site Proton acceptor is His235. The active site involves Glu237. Residue Arg249 coordinates substrate.

Belongs to the MetA family.

It localises to the cytoplasm. The catalysed reaction is L-homoserine + acetyl-CoA = O-acetyl-L-homoserine + CoA. It functions in the pathway amino-acid biosynthesis; L-methionine biosynthesis via de novo pathway; O-acetyl-L-homoserine from L-homoserine: step 1/1. In terms of biological role, transfers an acetyl group from acetyl-CoA to L-homoserine, forming acetyl-L-homoserine. In Bacteroides fragilis (strain YCH46), this protein is Homoserine O-acetyltransferase.